We begin with the raw amino-acid sequence, 315 residues long: Tubulin beta-1 chain (315 aa).

Residues Ser-6, Gly-10, Thr-11, Gly-12, Asn-72, and Asn-94 each coordinate GTP. The tract at residues 295 to 315 (DATADEEEYYEDEEEEEAQGM) is disordered. Residues 297–315 (TADEEEYYEDEEEEEAQGM) show a composition bias toward acidic residues.

This sequence belongs to the tubulin family. Dimer of alpha and beta chains. A typical microtubule is a hollow water-filled tube with an outer diameter of 25 nm and an inner diameter of 15 nM. Alpha-beta heterodimers associate head-to-tail to form protofilaments running lengthwise along the microtubule wall with the beta-tubulin subunit facing the microtubule plus end conferring a structural polarity. Microtubules usually have 13 protofilaments but different protofilament numbers can be found in some organisms and specialized cells. Mg(2+) is required as a cofactor.

It localises to the cytoplasm. The protein localises to the cytoskeleton. Functionally, tubulin is the major constituent of microtubules, a cylinder consisting of laterally associated linear protofilaments composed of alpha- and beta-tubulin heterodimers. Microtubules grow by the addition of GTP-tubulin dimers to the microtubule end, where a stabilizing cap forms. Below the cap, tubulin dimers are in GDP-bound state, owing to GTPase activity of alpha-tubulin. The protein is Tubulin beta-1 chain (TUBB1) of Daucus carota (Wild carrot).